Consider the following 310-residue polypeptide: tRNA pseudouridine synthase B (310 aa).

The Nucleophile role is filled by aspartate 49.

Belongs to the pseudouridine synthase TruB family. Type 1 subfamily.

The enzyme catalyses uridine(55) in tRNA = pseudouridine(55) in tRNA. Its function is as follows. Responsible for synthesis of pseudouridine from uracil-55 in the psi GC loop of transfer RNAs. The polypeptide is tRNA pseudouridine synthase B (Sinorhizobium medicae (strain WSM419) (Ensifer medicae)).